The following is a 105-amino-acid chain: Nitrogenase-stabilizing/protective protein NifW 1 (105 aa).

The protein belongs to the NifW family. Homotrimer; associates with NifD.

May protect the nitrogenase Fe-Mo protein from oxidative damage. This is Nitrogenase-stabilizing/protective protein NifW 1 from Trichormus variabilis (strain ATCC 29413 / PCC 7937) (Anabaena variabilis).